The following is a 121-amino-acid chain: Phosphoribosyl-AMP cyclohydrolase (121 aa).

Asp-74 provides a ligand contact to Mg(2+). A Zn(2+)-binding site is contributed by Cys-75. Asp-76 and Asp-78 together coordinate Mg(2+). 2 residues coordinate Zn(2+): Cys-91 and Cys-98.

The protein belongs to the PRA-CH family. In terms of assembly, homodimer. Mg(2+) is required as a cofactor. The cofactor is Zn(2+).

It localises to the cytoplasm. The catalysed reaction is 1-(5-phospho-beta-D-ribosyl)-5'-AMP + H2O = 1-(5-phospho-beta-D-ribosyl)-5-[(5-phospho-beta-D-ribosylamino)methylideneamino]imidazole-4-carboxamide. It participates in amino-acid biosynthesis; L-histidine biosynthesis; L-histidine from 5-phospho-alpha-D-ribose 1-diphosphate: step 3/9. Functionally, catalyzes the hydrolysis of the adenine ring of phosphoribosyl-AMP. The chain is Phosphoribosyl-AMP cyclohydrolase from Methanothrix thermoacetophila (strain DSM 6194 / JCM 14653 / NBRC 101360 / PT) (Methanosaeta thermophila).